Reading from the N-terminus, the 67-residue chain is Protein SlyX homolog (67 aa).

Belongs to the SlyX family.

The sequence is that of Protein SlyX homolog from Thiobacillus denitrificans (strain ATCC 25259 / T1).